A 230-amino-acid polypeptide reads, in one-letter code: tRNA (cytidine-2'-O-)-methyltransferase TrmJ (230 aa).

Residues 79-81 (TSG), glycine 115, isoleucine 135, and 142-144 (PIM) contribute to the S-adenosyl-L-methionine site.

It belongs to the class IV-like SAM-binding methyltransferase superfamily. RNA methyltransferase TrmH family. Homodimer.

The protein localises to the cytoplasm. It carries out the reaction cytidine(32) in tRNA + S-adenosyl-L-methionine = 2'-O-methylcytidine(32) in tRNA + S-adenosyl-L-homocysteine + H(+). Catalyzes the formation of 2'O-methylated cytidine (Cm32) at position 32 in tRNA. The polypeptide is tRNA (cytidine-2'-O-)-methyltransferase TrmJ (Methanocaldococcus jannaschii (strain ATCC 43067 / DSM 2661 / JAL-1 / JCM 10045 / NBRC 100440) (Methanococcus jannaschii)).